The chain runs to 187 residues: Threonylcarbamoyl-AMP synthase (187 aa).

The region spanning 3–187 (QVTPSQISGI…IQTGHIFRQG (185 aa)) is the YrdC-like domain.

The protein belongs to the SUA5 family. TsaC subfamily.

It is found in the cytoplasm. The enzyme catalyses L-threonine + hydrogencarbonate + ATP = L-threonylcarbamoyladenylate + diphosphate + H2O. Its function is as follows. Required for the formation of a threonylcarbamoyl group on adenosine at position 37 (t(6)A37) in tRNAs that read codons beginning with adenine. Catalyzes the conversion of L-threonine, HCO(3)(-)/CO(2) and ATP to give threonylcarbamoyl-AMP (TC-AMP) as the acyladenylate intermediate, with the release of diphosphate. This is Threonylcarbamoyl-AMP synthase from Shewanella amazonensis (strain ATCC BAA-1098 / SB2B).